Reading from the N-terminus, the 377-residue chain is Testis-expressed protein 13A (377 aa).

The tract at residues W92–P377 is required for repression of transcription. Residues Q122 to R156 adopt a coiled-coil conformation. An LRR repeat occupies E142–A165. A RanBP2-type zinc finger spans residues R345–G369. Residues C351, C354, C365, and C368 each contribute to the Zn(2+) site.

The protein belongs to the TEX13 family. Interacts with CNOT1; the interaction may inhibit CNOT1 binding to mRNA and subsequently CNOT1-mediated mRNA degradation.

Functionally, binds to ssRNA containing the consensus sequence 5'-AGGUAA-3'. Plays a role in transcriptional repression. Required for rapid sperm motility and timely degradation of mRNA via its interaction with CNOT1. The sequence is that of Testis-expressed protein 13A from Mus musculus (Mouse).